The following is a 138-amino-acid chain: Large ribosomal subunit protein bL17 (138 aa).

Belongs to the bacterial ribosomal protein bL17 family. Part of the 50S ribosomal subunit. Contacts protein L32.

In Nitrobacter hamburgensis (strain DSM 10229 / NCIMB 13809 / X14), this protein is Large ribosomal subunit protein bL17.